Consider the following 1142-residue polypeptide: MEFSVKNKNLLIQNLVEIQQQSFNELLCVGLKRQLLQLNFIENKTRNIKLIFHAKNYKFILPEITPKEAVLKSKTFASALFIPVEYRAKNSIGLYWVLLGHLPFMTKRGHFIINGVPRVVLNQMVRSPGLYYKTTANPQNVSNQVSINDSSHTSPVFYSDIIPNRGTWLRLEIDRKKNIWIRMKRVDKIPMMLFLQALGYDLHCIEKLLYSRKFLNCDYLLNTDHPADSNSALKKIKVEIEQQKVLKLAALEALDDDDPDIAKQLDYIEKTTTPEMGKDFLFQSFFNPASYDLSPIGRFQLNKKLNLSIPSDYTVLTEFDIYFATKELIKRATTMSNSDDIDHLQTRRIRSCGELLEIQLGEGIERLQKTIIDKINNTNLKKFAKHSSTYKRGTSSSIYRQDRQVINTDKNSKFLKNNLPTKFNRITLEPNLLPNGTSFIHKNNKLNQVSSNKLKLLSKKLIYLNLLINQKFIIAKLKSANLLANKSSFDKFLIHLVDESPRQKFVKNKTGLYHKFIPTPEIYIVEPNLNLVDMKSQQKFNLLKMDLYKVGLAESFLKSNLNNLNIYLQMCLRKPNTYFRDISKICSAQITQQLKQKSFLKLLLINPRLISQNNLLVLNRAVNFLKKIQFNLKDSPNLNDYQNFEINKLKAHIFKCQIKTQNNLTCCKYIYIKTKFNYINLPIKQFFFTKRFLITEQKLLLGGKFINSNLALTSLLKLHKFSEVVSNSFLIYNANNPNPNPTSIMSMIRPVNKSEIYRQLNRRFVRSRLQLNVLKSELTNSHSQLIKANNDPIDRELSIQILKQDVQKSNPFNKKGIYNQRFINKKFLDTSQFIDQELLHFLKTHKIFLDRQLTSLKTKQQNEKLKFIKWKKLRNFKNALKNPIQNLITTNAINGALQELFGLNPLSQFMDQINPLSEITHKRRISSMGPGGVNRDNASMDVRSIHPTHYGRICPIETPEGHNAGLVNSPTIYARINNYGFLETPFFKVNSGQIQAKAFYLNAQKEQKFKVSPPDLSCSELQFLPLGPTKIESEVPMRKDFKFQRMAATQIEFIGISPLQMISVATSLIPFLEHDDANRALMGSNMQRQAVPLLIAERPVVGTGLEGRVIADSSYIMQTKQSGVISYVSNEQVIVQTFHLNN.

The protein belongs to the RNA polymerase beta chain family. As to quaternary structure, in plastids the minimal PEP RNA polymerase catalytic core is composed of four subunits: alpha, beta, beta', and beta''. When a (nuclear-encoded) sigma factor is associated with the core the holoenzyme is formed, which can initiate transcription.

Its subcellular location is the plastid. The protein localises to the chloroplast. It catalyses the reaction RNA(n) + a ribonucleoside 5'-triphosphate = RNA(n+1) + diphosphate. Its function is as follows. DNA-dependent RNA polymerase catalyzes the transcription of DNA into RNA using the four ribonucleoside triphosphates as substrates. This chain is DNA-directed RNA polymerase subunit beta N-terminal section (rpoB1), found in Pleurastrum terricola (Filamentous green alga).